A 734-amino-acid chain; its full sequence is DNA replication licensing factor MCM5 (734 aa).

Residue Ser2 is modified to N-acetylserine. The 207-residue stretch at 331–537 (IYELISKSIA…RDVMLAKHVI (207 aa)) folds into the MCM domain. Arg371 is a binding site for ADP. N6-acetyllysine occurs at positions 392 and 396. Positions 512 to 515 (SRFD) match the Arginine finger motif. Ser605 bears the Phosphoserine mark.

The protein belongs to the MCM family. In terms of assembly, component of the MCM2-7 complex. The complex forms a toroidal hexameric ring with the proposed subunit order MCM2-MCM6-MCM4-MCM7-MCM3-MCM5. Component of the CMG helicase complex, a hexameric ring of related MCM2-7 subunits stabilized by CDC45 and the tetrameric GINS complex. Interacts with ANKRD17. Interacts with MCMBP. Interacts with TONSL; the interaction is direct.

The protein localises to the nucleus. It localises to the chromosome. Its subcellular location is the cytoplasm. It is found in the cytosol. The enzyme catalyses ATP + H2O = ADP + phosphate + H(+). Functionally, acts as a component of the MCM2-7 complex (MCM complex) which is the replicative helicase essential for 'once per cell cycle' DNA replication initiation and elongation in eukaryotic cells. Core component of CDC45-MCM-GINS (CMG) helicase, the molecular machine that unwinds template DNA during replication, and around which the replisome is built. The active ATPase sites in the MCM2-7 ring are formed through the interaction surfaces of two neighboring subunits such that a critical structure of a conserved arginine finger motif is provided in trans relative to the ATP-binding site of the Walker A box of the adjacent subunit. The six ATPase active sites, however, are likely to contribute differentially to the complex helicase activity. This chain is DNA replication licensing factor MCM5, found in Bos taurus (Bovine).